The sequence spans 422 residues: UDP-N-acetylglucosamine 1-carboxyvinyltransferase (422 aa).

Position 22-23 (22-23) interacts with phosphoenolpyruvate; that stretch reads KN. R93 serves as a coordination point for UDP-N-acetyl-alpha-D-glucosamine. The active-site Proton donor is C117. C117 bears the 2-(S-cysteinyl)pyruvic acid O-phosphothioketal mark. UDP-N-acetyl-alpha-D-glucosamine is bound by residues 122-126, D308, and L330; that span reads RPVDL.

It belongs to the EPSP synthase family. MurA subfamily.

The protein resides in the cytoplasm. It catalyses the reaction phosphoenolpyruvate + UDP-N-acetyl-alpha-D-glucosamine = UDP-N-acetyl-3-O-(1-carboxyvinyl)-alpha-D-glucosamine + phosphate. It functions in the pathway cell wall biogenesis; peptidoglycan biosynthesis. Its function is as follows. Cell wall formation. Adds enolpyruvyl to UDP-N-acetylglucosamine. This Helicobacter acinonychis (strain Sheeba) protein is UDP-N-acetylglucosamine 1-carboxyvinyltransferase.